A 377-amino-acid chain; its full sequence is Transmembrane 6 superfamily member 2 (377 aa).

The next 9 membrane-spanning stretches (helical) occupy residues 10 to 30 (IAALSLSALPVSYALNHVSAL), 34 to 54 (LWVALMSALILGLLFVAVYSL), 63 to 83 (PLYAVFAVFAFTSVVDLIIAL), 111 to 131 (FICYWDGTVHYLLYLAMAGAI), 140 to 160 (FGLYWLGSFAMSILVFLTGNI), 170 to 190 (PAFFLTIPYLLVPCWAGMKVF), 219 to 239 (LALVIYLILAGFFTLFRGLVV), 269 to 289 (MLMYMFYVLPFCGLAAYALTF), and 332 to 352 (TWGCFFVCNLLYALGPHLLAY). 2 EXPERA domains span residues 61-186 (YDPL…CWAG) and 217-351 (ADLA…HLLA).

It belongs to the TM6SF family. Substantial expression in liver and intestine, whereas all other tissues analyzed show low levels.

It is found in the endoplasmic reticulum membrane. Its subcellular location is the endoplasmic reticulum-Golgi intermediate compartment membrane. Functionally, regulator of liver fat metabolism influencing triglyceride secretion and hepatic lipid droplet content. May function as sterol isomerase. The sequence is that of Transmembrane 6 superfamily member 2 (TM6SF2) from Homo sapiens (Human).